The sequence spans 37 residues: Conotoxin r11e (37 aa).

Intrachain disulfides connect Cys-2–Cys-16, Cys-9–Cys-21, Cys-15–Cys-26, and Cys-20–Cys-33. Residues Glu-13 and Glu-14 each carry the 4-carboxyglutamate modification. At Trp-34 the chain carries 6'-bromotryptophan.

In terms of tissue distribution, expressed by the venom duct.

Its subcellular location is the secreted. Its function is as follows. Causes hyperactivity, circular motion, convulsion, urination and death, when injected into 13- to 15-day-old mice. Causes gasping, backward swimming or swimming in a vertical direction and death, when intraperitoneally injected into goldfish. The sequence is that of Conotoxin r11e from Conus radiatus (Rayed cone).